Consider the following 120-residue polypeptide: NAD(P)H-quinone oxidoreductase subunit 3 (120 aa).

The next 3 helical transmembrane spans lie at 7–27 (YEYF…SLTA), 64–84 (MFAL…PWAV), and 89–109 (LGLL…VALV).

Belongs to the complex I subunit 3 family. NDH-1 can be composed of about 15 different subunits; different subcomplexes with different compositions have been identified which probably have different functions.

Its subcellular location is the cellular thylakoid membrane. It carries out the reaction a plastoquinone + NADH + (n+1) H(+)(in) = a plastoquinol + NAD(+) + n H(+)(out). The enzyme catalyses a plastoquinone + NADPH + (n+1) H(+)(in) = a plastoquinol + NADP(+) + n H(+)(out). Functionally, NDH-1 shuttles electrons from an unknown electron donor, via FMN and iron-sulfur (Fe-S) centers, to quinones in the respiratory and/or the photosynthetic chain. The immediate electron acceptor for the enzyme in this species is believed to be plastoquinone. Couples the redox reaction to proton translocation, and thus conserves the redox energy in a proton gradient. Cyanobacterial NDH-1 also plays a role in inorganic carbon-concentration. This chain is NAD(P)H-quinone oxidoreductase subunit 3, found in Microcystis aeruginosa (strain NIES-843 / IAM M-2473).